The primary structure comprises 629 residues: Plastin-1 (629 aa).

The residue at position 1 (Met1) is an N-acetylmethionine. EF-hand domains are found at residues 11 to 46 and 51 to 86; these read EELE…ASLP and KVRE…LKSK. Residues Asp24, Asp26, Ser28, Tyr30, Glu35, Asp64, Asn66, Asp68, Lys70, and Glu75 each contribute to the Ca(2+) site. 2 actin-binding regions span residues 108 to 380 and 381 to 625; these read TSTI…CLHK and PNNN…GKGL. 4 consecutive Calponin-homology (CH) domains span residues 122–238, 266–376, 395–504, and 516–625; these read EEEK…KVGL, LSPE…NTYP, SKEE…RRYT, and KVND…GKGL.

As to quaternary structure, monomer. Post-translationally, phosphorylated. In small intestine, colon, and kidney; relatively lower levels of expression are detected in the lung and stomach.

It localises to the cytoplasm. It is found in the cell projection. Its subcellular location is the stereocilium. Functionally, actin-bundling protein. In the inner ear, it is required for stereocilia formation. Mediates liquid packing of actin filaments that is necessary for stereocilia to grow to their proper dimensions. The chain is Plastin-1 (PLS1) from Homo sapiens (Human).